We begin with the raw amino-acid sequence, 301 residues long: NAD kinase (301 aa).

Residue Asp-73 is the Proton acceptor of the active site. NAD(+) contacts are provided by residues Asp-73–Gly-74, Asn-160–Glu-161, Arg-188, Asp-190, Ala-198, Thr-201–Ser-206, Ala-225, and Gln-257.

It belongs to the NAD kinase family. A divalent metal cation serves as cofactor.

Its subcellular location is the cytoplasm. The catalysed reaction is NAD(+) + ATP = ADP + NADP(+) + H(+). In terms of biological role, involved in the regulation of the intracellular balance of NAD and NADP, and is a key enzyme in the biosynthesis of NADP. Catalyzes specifically the phosphorylation on 2'-hydroxyl of the adenosine moiety of NAD to yield NADP. The polypeptide is NAD kinase (Helicobacter hepaticus (strain ATCC 51449 / 3B1)).